Here is a 460-residue protein sequence, read N- to C-terminus: Serine--tRNA ligase (460 aa).

255 to 257 (TAE) contacts L-serine. Residues 286 to 288 (RKE) and Val302 each bind ATP. Residue Glu309 participates in L-serine binding. 373–376 (EMVS) is an ATP binding site. Thr409 serves as a coordination point for L-serine.

It belongs to the class-II aminoacyl-tRNA synthetase family. Type-1 seryl-tRNA synthetase subfamily. In terms of assembly, homodimer. The tRNA molecule binds across the dimer.

It localises to the cytoplasm. It catalyses the reaction tRNA(Ser) + L-serine + ATP = L-seryl-tRNA(Ser) + AMP + diphosphate + H(+). The catalysed reaction is tRNA(Sec) + L-serine + ATP = L-seryl-tRNA(Sec) + AMP + diphosphate + H(+). It participates in aminoacyl-tRNA biosynthesis; selenocysteinyl-tRNA(Sec) biosynthesis; L-seryl-tRNA(Sec) from L-serine and tRNA(Sec): step 1/1. Its function is as follows. Catalyzes the attachment of serine to tRNA(Ser). Is also able to aminoacylate tRNA(Sec) with serine, to form the misacylated tRNA L-seryl-tRNA(Sec), which will be further converted into selenocysteinyl-tRNA(Sec). This is Serine--tRNA ligase from Aeropyrum pernix (strain ATCC 700893 / DSM 11879 / JCM 9820 / NBRC 100138 / K1).